The sequence spans 469 residues: Glutamine synthetase (469 aa).

A GS beta-grasp domain is found at 15–96; it reads NDVKFIDVRF…INFFIHDPIT (82 aa). The region spanning 104 to 469 is the GS catalytic domain; that stretch reads PRNIAKKAEA…PHEFELYFDI (366 aa). The Mg(2+) site is built by Glu-129 and Glu-131. Glu-205 serves as a coordination point for ATP. The Mg(2+) site is built by Glu-210 and Glu-218. Position 221–223 (221–223) interacts with ATP; it reads YKF. L-glutamate contacts are provided by residues 262 to 263 and Gly-263; that span reads NG. A Mg(2+)-binding site is contributed by His-267. ATP contacts are provided by residues 269-271 and Ser-271; that span reads HQS. Positions 320, 326, and 338 each coordinate L-glutamate. Residues Arg-338, Arg-343, and Lys-352 each coordinate ATP. Glu-357 serves as a coordination point for Mg(2+). Arg-359 is an L-glutamate binding site. Residue Tyr-397 is modified to O-AMP-tyrosine.

The protein belongs to the glutamine synthetase family. In terms of assembly, oligomer of 12 subunits arranged in the form of two hexagons. It depends on Mg(2+) as a cofactor.

The protein localises to the cytoplasm. It catalyses the reaction L-glutamate + NH4(+) + ATP = L-glutamine + ADP + phosphate + H(+). With respect to regulation, the activity of this enzyme could be controlled by adenylation under conditions of abundant glutamine. In terms of biological role, catalyzes the ATP-dependent biosynthesis of glutamine from glutamate and ammonia. The chain is Glutamine synthetase from Streptomyces filamentosus (Streptomyces roseosporus).